The following is a 279-amino-acid chain: MKRIFLFLATNIAVLVVINIVLAVLGINSRGGTGSLLAYSAVVGFTGSIISLLMSKFIAKQSVGAEVIDTPRTEEEAWLLNTVEAQARQWNLKTPEVAIYHSPEPNAFATGASRNSSLIAVSTGLLDHMTRDEVEAVLAHEMAHVGNGDMVTLTLIQGVVNTFVVFLSRIIANLIARNNDGSQSQGTYFLVSMVFQILFGFLASLIVMWFSRQREYRADAGAAKLVGAPKMISALQRLKGNPVDLPEEMNAMGIAGDTRDSLLSTHPSLDNRIARLKSL.

Helical transmembrane passes span 4-24 (IFLF…VLAV) and 34-54 (GSLL…SLLM). His-140 is a binding site for Zn(2+). Glu-141 is a catalytic residue. His-144 serves as a coordination point for Zn(2+). Helical transmembrane passes span 155–175 (LIQG…ANLI) and 189–209 (FLVS…IVMW). Glu-215 is a binding site for Zn(2+).

The protein belongs to the peptidase M48B family. The cofactor is Zn(2+).

The protein localises to the cell inner membrane. The protein is Protease HtpX homolog of Neisseria meningitidis serogroup B (strain ATCC BAA-335 / MC58).